A 234-amino-acid polypeptide reads, in one-letter code: SPX domain-containing protein 6 (234 aa).

The 137-residue stretch at 1–137 (MKFGKLLKRQ…GGALAAPVAE (137 aa)) folds into the SPX domain. Positions 202–234 (GSSTHGRHSLPPLTLPDSDWLRSFQPPSPIPIQ) are disordered.

As to expression, predominantly expressed in roots and leaves.

Its function is as follows. May be involved in maintaining cellular Pi homeostasis when plants are exposed to an external change in Pi. This chain is SPX domain-containing protein 6, found in Oryza sativa subsp. japonica (Rice).